A 121-amino-acid polypeptide reads, in one-letter code: Large ribosomal subunit protein uL24 (121 aa).

The protein belongs to the universal ribosomal protein uL24 family. In terms of assembly, part of the 50S ribosomal subunit.

In terms of biological role, one of two assembly initiator proteins, it binds directly to the 5'-end of the 23S rRNA, where it nucleates assembly of the 50S subunit. Its function is as follows. Located at the polypeptide exit tunnel on the outside of the subunit. This chain is Large ribosomal subunit protein uL24, found in Pyrococcus horikoshii (strain ATCC 700860 / DSM 12428 / JCM 9974 / NBRC 100139 / OT-3).